The sequence spans 151 residues: Endoribonuclease YbeY (151 aa).

Zn(2+) is bound by residues His117, His121, and His127.

This sequence belongs to the endoribonuclease YbeY family. Requires Zn(2+) as cofactor.

The protein resides in the cytoplasm. Single strand-specific metallo-endoribonuclease involved in late-stage 70S ribosome quality control and in maturation of the 3' terminus of the 16S rRNA. The polypeptide is Endoribonuclease YbeY (Alkaliphilus oremlandii (strain OhILAs) (Clostridium oremlandii (strain OhILAs))).